The primary structure comprises 379 residues: Probable tRNA sulfurtransferase (379 aa).

Residues 52–157 form the THUMP domain; sequence DEFLDKLKFI…RHHAFVFCKI (106 aa). Residues 175–176, R257, G279, and Q288 each bind ATP; that span reads LL.

It belongs to the ThiI family.

The protein localises to the cytoplasm. It catalyses the reaction [ThiI sulfur-carrier protein]-S-sulfanyl-L-cysteine + a uridine in tRNA + 2 reduced [2Fe-2S]-[ferredoxin] + ATP + H(+) = [ThiI sulfur-carrier protein]-L-cysteine + a 4-thiouridine in tRNA + 2 oxidized [2Fe-2S]-[ferredoxin] + AMP + diphosphate. It carries out the reaction [ThiS sulfur-carrier protein]-C-terminal Gly-Gly-AMP + S-sulfanyl-L-cysteinyl-[cysteine desulfurase] + AH2 = [ThiS sulfur-carrier protein]-C-terminal-Gly-aminoethanethioate + L-cysteinyl-[cysteine desulfurase] + A + AMP + 2 H(+). It functions in the pathway cofactor biosynthesis; thiamine diphosphate biosynthesis. Catalyzes the ATP-dependent transfer of a sulfur to tRNA to produce 4-thiouridine in position 8 of tRNAs, which functions as a near-UV photosensor. Also catalyzes the transfer of sulfur to the sulfur carrier protein ThiS, forming ThiS-thiocarboxylate. This is a step in the synthesis of thiazole, in the thiamine biosynthesis pathway. The sulfur is donated as persulfide by IscS. This Mycoplasmopsis pulmonis (strain UAB CTIP) (Mycoplasma pulmonis) protein is Probable tRNA sulfurtransferase.